The following is a 183-amino-acid chain: Ribosome maturation factor RimM (183 aa).

A PRC barrel domain is found at 105 to 181 (ANEYHLMDLI…RIEIDPPLGL (77 aa)).

The protein belongs to the RimM family. In terms of assembly, binds ribosomal protein uS19.

It is found in the cytoplasm. Its function is as follows. An accessory protein needed during the final step in the assembly of 30S ribosomal subunit, possibly for assembly of the head region. Essential for efficient processing of 16S rRNA. May be needed both before and after RbfA during the maturation of 16S rRNA. It has affinity for free ribosomal 30S subunits but not for 70S ribosomes. The protein is Ribosome maturation factor RimM of Thermosynechococcus vestitus (strain NIES-2133 / IAM M-273 / BP-1).